Consider the following 186-residue polypeptide: MVSNLQQVVKALKQGQVVAYPTEGVFGLGCDPDNEVAIERLLTIKQRPSDKGLILIAADFQQLQPYLDLTSLSAEQLQRVFATWPGPYTWVMPASARASALVTGYRQTVAVRVSDHPLVQKLCSEYGKPLTSTSANLSGQTECKTVEQVQDQLGSQISVILFGEIGERHRPSEIRDARTEQLLRQG.

The YrdC-like domain occupies 2–186 (VSNLQQVVKA…ARTEQLLRQG (185 aa)).

It belongs to the SUA5 family. TsaC subfamily.

Its subcellular location is the cytoplasm. The enzyme catalyses L-threonine + hydrogencarbonate + ATP = L-threonylcarbamoyladenylate + diphosphate + H2O. Its function is as follows. Required for the formation of a threonylcarbamoyl group on adenosine at position 37 (t(6)A37) in tRNAs that read codons beginning with adenine. Catalyzes the conversion of L-threonine, HCO(3)(-)/CO(2) and ATP to give threonylcarbamoyl-AMP (TC-AMP) as the acyladenylate intermediate, with the release of diphosphate. The sequence is that of Threonylcarbamoyl-AMP synthase from Vibrio vulnificus (strain CMCP6).